The chain runs to 68 residues: Medusin-DA1 (68 aa).

The signal sequence occupies residues 1 to 22 (MAFLKKSLFLVLFLGLVSLSVC). A propeptide spanning residues 23 to 48 (EEEKRENEEEKNEQEEDDREERNEEK) is cleaved from the precursor. The interval 25 to 47 (EKRENEEEKNEQEEDDREERNEE) is disordered. Over residues 31-41 (EEKNEQEEDDR) the composition is skewed to acidic residues. L67 is modified (leucine amide).

It belongs to the frog skin active peptide (FSAP) family. Medusin subfamily. As to expression, expressed by the skin glands.

The protein localises to the secreted. Its function is as follows. Antimicrobial peptide with activity against Gram-positive bacteria (S.aureus, MIC=32 mg/L) and fungi (C.albicans, MIC=64 mg/L). Shows weak hemolytic activity. The sequence is that of Medusin-DA1 from Agalychnis dacnicolor (Giant Mexican leaf frog).